We begin with the raw amino-acid sequence, 429 residues long: Ribosomal RNA small subunit methyltransferase B (429 aa).

S-adenosyl-L-methionine is bound by residues 254 to 260 (CAAPGGK), Asp277, Asp303, and Asp322. The active-site Nucleophile is the Cys375.

This sequence belongs to the class I-like SAM-binding methyltransferase superfamily. RsmB/NOP family.

It is found in the cytoplasm. It catalyses the reaction cytidine(967) in 16S rRNA + S-adenosyl-L-methionine = 5-methylcytidine(967) in 16S rRNA + S-adenosyl-L-homocysteine + H(+). Specifically methylates the cytosine at position 967 (m5C967) of 16S rRNA. The sequence is that of Ribosomal RNA small subunit methyltransferase B from Yersinia pestis bv. Antiqua (strain Angola).